Reading from the N-terminus, the 366-residue chain is Chorismate synthase (366 aa).

Residues Arg48 and Arg54 each contribute to the NADP(+) site. Residues 132 to 134 (RSS), 244 to 245 (NA), Gly289, 304 to 308 (KPTSS), and Arg330 each bind FMN.

The protein belongs to the chorismate synthase family. Homotetramer. Requires FMNH2 as cofactor.

It catalyses the reaction 5-O-(1-carboxyvinyl)-3-phosphoshikimate = chorismate + phosphate. It functions in the pathway metabolic intermediate biosynthesis; chorismate biosynthesis; chorismate from D-erythrose 4-phosphate and phosphoenolpyruvate: step 7/7. In terms of biological role, catalyzes the anti-1,4-elimination of the C-3 phosphate and the C-6 proR hydrogen from 5-enolpyruvylshikimate-3-phosphate (EPSP) to yield chorismate, which is the branch point compound that serves as the starting substrate for the three terminal pathways of aromatic amino acid biosynthesis. This reaction introduces a second double bond into the aromatic ring system. This is Chorismate synthase from Methylobacterium radiotolerans (strain ATCC 27329 / DSM 1819 / JCM 2831 / NBRC 15690 / NCIMB 10815 / 0-1).